The following is a 273-amino-acid chain: Putative pyruvate, phosphate dikinase regulatory protein (273 aa).

ADP is bound at residue 153-160 (GVSRTSKS).

This sequence belongs to the pyruvate, phosphate/water dikinase regulatory protein family. PDRP subfamily.

It carries out the reaction N(tele)-phospho-L-histidyl/L-threonyl-[pyruvate, phosphate dikinase] + ADP = N(tele)-phospho-L-histidyl/O-phospho-L-threonyl-[pyruvate, phosphate dikinase] + AMP + H(+). The enzyme catalyses N(tele)-phospho-L-histidyl/O-phospho-L-threonyl-[pyruvate, phosphate dikinase] + phosphate + H(+) = N(tele)-phospho-L-histidyl/L-threonyl-[pyruvate, phosphate dikinase] + diphosphate. In terms of biological role, bifunctional serine/threonine kinase and phosphorylase involved in the regulation of the pyruvate, phosphate dikinase (PPDK) by catalyzing its phosphorylation/dephosphorylation. The chain is Putative pyruvate, phosphate dikinase regulatory protein from Ehrlichia canis (strain Jake).